The primary structure comprises 227 residues: Urease accessory protein UreF (227 aa).

This sequence belongs to the UreF family. As to quaternary structure, ureD, UreF and UreG form a complex that acts as a GTP-hydrolysis-dependent molecular chaperone, activating the urease apoprotein by helping to assemble the nickel containing metallocenter of UreC. The UreE protein probably delivers the nickel.

The protein localises to the cytoplasm. Its function is as follows. Required for maturation of urease via the functional incorporation of the urease nickel metallocenter. The sequence is that of Urease accessory protein UreF from Methylobacillus flagellatus (strain ATCC 51484 / DSM 6875 / VKM B-1610 / KT).